Consider the following 1829-residue polypeptide: Sodium channel protein type 4 subunit alpha A (1829 aa).

At 1 to 124 (MARLLPPTGT…RGAIKILIHS (124 aa)) the chain is on the cytoplasmic side. A disordered region spans residues 32–52 (STREELEGAEEEPQAPSSDLE). The I repeat unit spans residues 106 to 421 (CISPFSIVRR…VVAMAYDEQN (316 aa)). The helical transmembrane segment at 125 to 143 (LFSMFIMITILSNCVFMTM) threads the bilayer. Over 144–150 (SNPPAWS) the chain is Extracellular. Residues 151–171 (KTVEYVFTGIYTFEATVKVLS) form a helical membrane-spanning segment. The Cytoplasmic segment spans residues 172-185 (RGFCIGPFTFLRDP). A helical membrane pass occupies residues 186–203 (WNWLDFMVISMAYVTEFV). Residues 204 to 209 (DLGNVS) are Extracellular-facing. The N-linked (GlcNAc...) asparagine glycan is linked to Asn207. Residues 210-226 (ALRTFRVLRALKTITVI) form a helical membrane-spanning segment. Topologically, residues 227 to 245 (PGLKTIVGALIQSVKKMID) are cytoplasmic. Residues 246–265 (VMILTIFALAVFALIGLQLF) form a helical membrane-spanning segment. Residues 266–358 (MGNLRQKCIR…PNYGYTSYDN (93 aa)) lie on the Extracellular side of the membrane. Cys273 and Cys327 form a disulfide bridge. Asn280, Asn293, and Asn329 each carry an N-linked (GlcNAc...) asparagine glycan. Residues Cys336 and Cys342 are joined by a disulfide bond. The segment at residues 359–383 (FGWAFLALFRLMTQDFWENLFQLTL) is an intramembrane region (pore-forming). Residues 384–390 (RAAGKTY) lie on the Extracellular side of the membrane. The helical transmembrane segment at 391-411 (MIFFVVVIFLGSFYLINLILA) threads the bilayer. Residues 412 to 582 (VVAMAYDEQN…KWVHFVVMDP (171 aa)) lie on the Cytoplasmic side of the membrane. Positions 446–467 (ETGSKASLASQKTQSRGSNRTG) are enriched in polar residues. The tract at residues 446–468 (ETGSKASLASQKTQSRGSNRTGS) is disordered. Residues 564–836 (CCAPWILFKK…QIAIGRITRG (273 aa)) form an II repeat. The helical transmembrane segment at 583–601 (FVDLGITICIVLNTLFMAM) threads the bilayer. At 602–612 (EHYPMSPHFEH) the chain is on the extracellular side. A helical transmembrane segment spans residues 613–632 (VLSVGNLVFTGIFTAEMVFK). The Cytoplasmic portion of the chain corresponds to 633-646 (LIAMDPYYYFQVGW). Residues 647–666 (NIFDSIIVTLSLVELGLANV) form a helical membrane-spanning segment. At 667–668 (QG) the chain is on the extracellular side. The chain crosses the membrane as a helical span at residues 669–686 (LSVLRSFRLLRVFKLAKS). The Cytoplasmic portion of the chain corresponds to 687–702 (WPTLNMLIKIIGNSVG). The helical transmembrane segment at 703–721 (ALGNLTLVLAIIVFIFAVV) threads the bilayer. The Extracellular segment spans residues 722–750 (GMQLFGKSYKDCVCKISEDCELPRWHMND). Cys735 and Cys741 are oxidised to a cystine. The pore-forming intramembrane region spans 751-771 (FFHSFLIVFRILCGEWIETMW). The Extracellular segment spans residues 772-782 (DCMEVAGASMC). Residues Cys773 and Cys782 are joined by a disulfide bond. The helical transmembrane segment at 783–801 (LIVFMMVMVIGNLVVLNLF) threads the bilayer. The Cytoplasmic portion of the chain corresponds to 802–998 (LALLLSSFSG…TCFTIVEHDY (197 aa)). The segment at 901–957 (SDVEEDEDSESSDEEDAKATLNDGDSSVCSTVDYQPPEPEPEPEEVEEEEPEPEEPE) is disordered. Acidic residues predominate over residues 902–916 (DVEEDEDSESSDEED). The segment covering 923-933 (DGDSSVCSTVD) has biased composition (polar residues). Residues 939 to 957 (PEPEPEEVEEEEPEPEEPE) show a composition bias toward acidic residues. The stretch at 979-1292 (WGKKWWNLRR…KKYYNAMKKL (314 aa)) is one III repeat. A helical transmembrane segment spans residues 999–1016 (FETFIIFMILLSSGALAF). Topologically, residues 1017 to 1029 (EDINIERRRVIKT) are extracellular. A helical membrane pass occupies residues 1030–1048 (ILEYADKVFTYIFIVEMLL). Topologically, residues 1049–1062 (KWVAYGFKTYFTNA) are cytoplasmic. A helical membrane pass occupies residues 1063 to 1081 (WCWLDFLIVDVSLVSLTAN). The Extracellular portion of the chain corresponds to 1082–1089 (LMGYSELG). The helical transmembrane segment at 1090 to 1108 (AIKSLRTLRALRPLRALSR) threads the bilayer. Over 1109–1125 (FEGMRVVVNALVGAIPS) the chain is Cytoplasmic. A helical membrane pass occupies residues 1126-1145 (IFNVLLVCLIFWLIFSIMGV). Residues 1146–1196 (NLFAGKFYHCINTTTEERIPMDVVNNKSDCMALMYTNEVRWVNVKVNYDNV) are Extracellular-facing. Cys1155 and Cys1175 are joined by a disulfide. Asn1157 and Asn1171 each carry an N-linked (GlcNAc...) asparagine glycan. Residues 1197 to 1218 (GLGYLSLLQIATFKGWMDIMYA) constitute an intramembrane region (pore-forming). Over 1219–1235 (AVDSREVDEQPSYEINL) the chain is Extracellular. Residues 1236 to 1257 (YMYLYFVIFIIFGSFFTLNLFI) traverse the membrane as a helical segment. Residues 1258 to 1320 (GVIIDNFNQQ…LVFDFISKQF (63 aa)) lie on the Cytoplasmic side of the membrane. The important for rapid channel inactivation stretch occupies residues 1276-1278 (IFM). One copy of the IV repeat lies at 1301 to 1599 (IPRPSNIIQG…WEKFDVDATQ (299 aa)). The chain crosses the membrane as a helical span at residues 1321 to 1338 (FDIFIMVLICLNMVTMMI). At 1339-1349 (ETDDQSAEKEY) the chain is on the extracellular side. A helical transmembrane segment spans residues 1350-1368 (VLYQINLVFIVVFTSECVL). The Cytoplasmic portion of the chain corresponds to 1369–1380 (KLFALRQYFFTI). A helical membrane pass occupies residues 1381–1398 (GWNVFDFVVVILSIAGLM). Topologically, residues 1399 to 1411 (LSDIIEKYFVSPT) are extracellular. A helical transmembrane segment spans residues 1412–1428 (LFRVIRLARIGRVLRLI). At 1429 to 1447 (RGAKGIRTLLFALMMSLPA) the chain is on the cytoplasmic side. Residues 1448 to 1465 (LFNIGLLLFLIMFIFSIF) traverse the membrane as a helical segment. Residues 1466 to 1487 (GMSNFAYVKKQAGIDDIFNFET) lie on the Extracellular side of the membrane. The pore-forming intramembrane region spans 1488–1510 (FGGSIICLFEITTSAGWDGLLLP). At 1511–1540 (ILNSGPPDCDPDFENPGTDVRGNCGNPGMG) the chain is on the extracellular side. Cys1519 and Cys1534 are disulfide-bonded. The chain crosses the membrane as a helical span at residues 1541–1563 (IMFFCSYIIMSFLVVVNMYIAII). Over 1564–1829 (LENFNNAQEE…NATTIKESIV (266 aa)) the chain is Cytoplasmic. Residues 1693–1722 (EERAAIAVQRIYRRHLLKRAIRYACFMRRS) form the IQ domain. The tract at residues 1765 to 1786 (PMRPNSQPPKPSQVTQTRASVT) is disordered.

It belongs to the sodium channel (TC 1.A.1.10) family. Nav1.4/SCN4A subfamily. Voltage-gated sodium (Nav) channels consist of an ion-conducting alpha subunit which is functional on its own associated with regulatory beta subunits. As to expression, expressed in skeletal muscle, brain, spinal cord, and eye.

The protein localises to the cell membrane. It catalyses the reaction Na(+)(in) = Na(+)(out). Functionally, pore-forming subunit of a voltage-gated sodium (Nav) channel that directly mediates the depolarizing phase of action potentials in excitable membranes. Navs, also called VGSCs (voltage-gated sodium channels) or VDSCs (voltage-dependent sodium channels), operate by switching between closed and open conformations depending on the voltage difference across the membrane. In the open conformation they allow Na(+) ions to selectively pass through the pore, along their electrochemical gradient. The influx of Na+ ions provokes membrane depolarization, initiating the propagation of electrical signals throughout cells and tissues. This Danio rerio (Zebrafish) protein is Sodium channel protein type 4 subunit alpha A (scn4aa).